The chain runs to 294 residues: Putative pyruvate, phosphate dikinase regulatory protein (294 aa).

156–163 (GVSRSGKT) contributes to the ADP binding site.

The protein belongs to the pyruvate, phosphate/water dikinase regulatory protein family. PDRP subfamily.

The enzyme catalyses N(tele)-phospho-L-histidyl/L-threonyl-[pyruvate, phosphate dikinase] + ADP = N(tele)-phospho-L-histidyl/O-phospho-L-threonyl-[pyruvate, phosphate dikinase] + AMP + H(+). The catalysed reaction is N(tele)-phospho-L-histidyl/O-phospho-L-threonyl-[pyruvate, phosphate dikinase] + phosphate + H(+) = N(tele)-phospho-L-histidyl/L-threonyl-[pyruvate, phosphate dikinase] + diphosphate. Functionally, bifunctional serine/threonine kinase and phosphorylase involved in the regulation of the pyruvate, phosphate dikinase (PPDK) by catalyzing its phosphorylation/dephosphorylation. This chain is Putative pyruvate, phosphate dikinase regulatory protein, found in Cutibacterium acnes (strain DSM 16379 / KPA171202) (Propionibacterium acnes).